A 481-amino-acid polypeptide reads, in one-letter code: Cytochrome c oxidase subunit 1 (481 aa).

A helical transmembrane segment spans residues 22-42 (ISYLWLAYWFGMIGFYMSVLI). Positions 45 and 50 each coordinate Ca(2+). 8 helical membrane-spanning segments follow: residues 64-84 (LLFT…GLFG), 109-129 (SLLF…LEIG), 151-171 (FIIF…VNFI), 194-214 (IVLT…VFLM), 240-260 (LFWF…FGII), 278-298 (MILA…TSYV), 309-329 (YFTT…FNWV), and 343-363 (LVLF…TGVV). His-69 is a Fe(II)-heme a binding site. Position 246 (His-246) interacts with Cu cation. Positions 246 to 250 (HPEVY) form a cross-link, 1'-histidyl-3'-tyrosine (His-Tyr). Residue Tyr-250 participates in O2 binding. The Mg(2+) site is built by His-374 and Asp-375. Heme a3 is bound at residue His-382. The next 2 membrane-spanning stretches (helical) occupy residues 382-402 (HFHF…IIYI) and 420-440 (IAPI…FTGF). His-384 is a Fe(II)-heme a binding site. Residue Pro-448 participates in Ca(2+) binding. The helical transmembrane segment at 459 to 479 (FICTLGATMMLVLKLAILFII) threads the bilayer.

It belongs to the heme-copper respiratory oxidase family. Component of the cytochrome c oxidase (complex IV, CIV), a multisubunit enzyme composed of a catalytic core of 3 subunits and several supernumerary subunits. The complex exists as a monomer or a dimer and forms supercomplexes (SCs) in the inner mitochondrial membrane with ubiquinol-cytochrome c oxidoreductase (cytochrome b-c1 complex, complex III, CIII). Heme is required as a cofactor. The cofactor is Cu cation.

It localises to the mitochondrion inner membrane. The enzyme catalyses 4 Fe(II)-[cytochrome c] + O2 + 8 H(+)(in) = 4 Fe(III)-[cytochrome c] + 2 H2O + 4 H(+)(out). It participates in energy metabolism; oxidative phosphorylation. Its function is as follows. Component of the cytochrome c oxidase, the last enzyme in the mitochondrial electron transport chain which drives oxidative phosphorylation. The respiratory chain contains 3 multisubunit complexes succinate dehydrogenase (complex II, CII), ubiquinol-cytochrome c oxidoreductase (cytochrome b-c1 complex, complex III, CIII) and cytochrome c oxidase (complex IV, CIV), that cooperate to transfer electrons derived from NADH and succinate to molecular oxygen, creating an electrochemical gradient over the inner membrane that drives transmembrane transport and the ATP synthase. Cytochrome c oxidase is the component of the respiratory chain that catalyzes the reduction of oxygen to water. Electrons originating from reduced cytochrome c in the intermembrane space (IMS) are transferred via the dinuclear copper A center (CU(A)) of subunit 2 and heme A of subunit 1 to the active site in subunit 1, a binuclear center (BNC) formed by heme A3 and copper B (CU(B)). The BNC reduces molecular oxygen to 2 water molecules using 4 electrons from cytochrome c in the IMS and 4 protons from the mitochondrial matrix. This chain is Cytochrome c oxidase subunit 1 (MT-CO1), found in Theileria parva (East coast fever infection agent).